The chain runs to 158 residues: NADPH-dependent 7-cyano-7-deazaguanine reductase (158 aa).

Cys56 functions as the Thioimide intermediate in the catalytic mechanism. The active-site Proton donor is Asp63. Substrate-binding positions include 78 to 80 and 97 to 98; these read LES and HE.

Belongs to the GTP cyclohydrolase I family. QueF type 1 subfamily.

Its subcellular location is the cytoplasm. The catalysed reaction is 7-aminomethyl-7-carbaguanine + 2 NADP(+) = 7-cyano-7-deazaguanine + 2 NADPH + 3 H(+). It functions in the pathway tRNA modification; tRNA-queuosine biosynthesis. Functionally, catalyzes the NADPH-dependent reduction of 7-cyano-7-deazaguanine (preQ0) to 7-aminomethyl-7-deazaguanine (preQ1). This is NADPH-dependent 7-cyano-7-deazaguanine reductase from Nitrobacter winogradskyi (strain ATCC 25391 / DSM 10237 / CIP 104748 / NCIMB 11846 / Nb-255).